The sequence spans 394 residues: Elongation factor Tu 2 (394 aa).

Residues 10–204 form the tr-type G domain; sequence KPHVNVGTIG…ALDSYIPEPE (195 aa). The G1 stretch occupies residues 19-26; sequence GHVDHGKT. 19 to 26 lines the GTP pocket; the sequence is GHVDHGKT. Residue Thr-26 participates in Mg(2+) binding. The segment at 60–64 is G2; the sequence is GITIN. A G3 region spans residues 81–84; sequence DCPG. GTP contacts are provided by residues 81–85 and 136–139; these read DCPGH and NKCD. The G4 stretch occupies residues 136–139; the sequence is NKCD. Positions 174–176 are G5; that stretch reads SAL.

It belongs to the TRAFAC class translation factor GTPase superfamily. Classic translation factor GTPase family. EF-Tu/EF-1A subfamily. In terms of assembly, monomer.

It is found in the cytoplasm. It carries out the reaction GTP + H2O = GDP + phosphate + H(+). GTP hydrolase that promotes the GTP-dependent binding of aminoacyl-tRNA to the A-site of ribosomes during protein biosynthesis. This chain is Elongation factor Tu 2, found in Shewanella loihica (strain ATCC BAA-1088 / PV-4).